The sequence spans 350 residues: Protein MGF 360-12L (350 aa).

One copy of the ANK repeat lies at 57–89 (DLNTALVKAVRENNYNLIKLFAEWGANINYGLV).

The protein belongs to the asfivirus MGF 360 family.

Functionally, plays a role in virus cell tropism, and may be required for efficient virus replication in macrophages. This chain is Protein MGF 360-12L, found in African swine fever virus (isolate Warthog/Namibia/Wart80/1980) (ASFV).